The primary structure comprises 438 residues: Acid phosphatase type 7 (438 aa).

The N-terminal stretch at 1 to 26 is a signal peptide; sequence MHPLPGYWSCYCLLLLFSLGVQGSLG. The Fe cation site is built by Asp141, Asp170, and Tyr173. A Zn(2+)-binding site is contributed by Asp170. Asn205 contributes to the Zn(2+) binding site. A glycan (N-linked (GlcNAc...) asparagine) is linked at Asn211. Zn(2+)-binding residues include His286 and His333. His335 is a binding site for Fe cation. Residues Asn350 and Asn404 are each glycosylated (N-linked (GlcNAc...) asparagine).

This sequence belongs to the metallophosphoesterase superfamily. Purple acid phosphatase family. Fe cation serves as cofactor. Zn(2+) is required as a cofactor.

It localises to the secreted. The catalysed reaction is a phosphate monoester + H2O = an alcohol + phosphate. In Homo sapiens (Human), this protein is Acid phosphatase type 7.